The chain runs to 616 residues: Electron transfer flavoprotein-ubiquinone oxidoreductase, mitochondrial (616 aa).

Residues 1 to 32 (MLVRLTKLSCPAYHWFHALKIKKCLPLCAPRC) constitute a mitochondrion transit peptide. Residue 70–84 (VVIVGAGPAGLSAAI) coordinates FAD. Lys-95 is modified (N6-acetyllysine). An intramembrane segment occupies 108-129 (IGAHTLSGACLDPAAFKELFPD). N6-acetyllysine occurs at positions 131 and 222. Positions 304 and 305 each coordinate a ubiquinone. Lys-356 and Lys-415 each carry N6-acetyllysine. The stretch at 427 to 446 (TGLHVTEYEDNLKQSWVWKE) is an intramembrane region. Residue Ser-550 is modified to Phosphoserine. 4 residues coordinate [4Fe-4S] cluster: Cys-560, Cys-585, Cys-588, and Cys-591. The 30-residue stretch at 576-605 (FRLQINAQNCVHCKTCDIKDPSQNINWVVP) folds into the 4Fe-4S ferredoxin-type domain.

Belongs to the ETF-QO/FixC family. Monomer. It depends on [4Fe-4S] cluster as a cofactor. FAD serves as cofactor. Acetylation of Lys-95 and Lys-222 is observed in liver mitochondria from fasted mice but not from fed mice.

The protein localises to the mitochondrion inner membrane. The catalysed reaction is a ubiquinone + reduced [electron-transfer flavoprotein] = a ubiquinol + oxidized [electron-transfer flavoprotein] + H(+). Accepts electrons from ETF and reduces ubiquinone. In Mus musculus (Mouse), this protein is Electron transfer flavoprotein-ubiquinone oxidoreductase, mitochondrial (Etfdh).